The sequence spans 133 residues: Small ribosomal subunit protein uS9 (133 aa).

It belongs to the universal ribosomal protein uS9 family.

This is Small ribosomal subunit protein uS9 from Picrophilus torridus (strain ATCC 700027 / DSM 9790 / JCM 10055 / NBRC 100828 / KAW 2/3).